A 189-amino-acid chain; its full sequence is Large ribosomal subunit protein uL6 (189 aa).

This sequence belongs to the universal ribosomal protein uL6 family. As to quaternary structure, part of the 50S ribosomal subunit.

This protein binds to the 23S rRNA, and is important in its secondary structure. It is located near the subunit interface in the base of the L7/L12 stalk, and near the tRNA binding site of the peptidyltransferase center. This chain is Large ribosomal subunit protein uL6, found in Bacteroides fragilis (strain ATCC 25285 / DSM 2151 / CCUG 4856 / JCM 11019 / LMG 10263 / NCTC 9343 / Onslow / VPI 2553 / EN-2).